A 338-amino-acid chain; its full sequence is MTKKYNIAVIGATGNVGRETLNILAERNFPINKVYAIASDSSLGREVSFGEKILQINSLKSLHFDDIDIAFFCAGSEVSKEFIPKATASNCVVIDKSSLFRVDNQVPLIVPEVNLSTLKEFNTKNIIANPNCIVIPLAVALKPLDNEIKIKRVVISTYQSVSGAGKAGMDELYDQTKSKYVFGENDPKKFPKQIAFNIFPHIGDLNKDGYTSEEAKIASELNKIIGNHFKASVTSVRVPVFIGHSISVNIEFNDKIDAKEVEEILQDADGIVTISNNNYLAYISPVEVVGEDAVYVSRIRNDVSRDNTINLWITCDNLRKGAALNSVQIAEELINNYL.

NADP(+)-binding positions include 13–16 (TGNV) and 41–42 (SS). R101 is a binding site for phosphate. C132 serves as the catalytic Acyl-thioester intermediate. Residue Q159 participates in substrate binding. Residues 162 to 163 (SG) and P187 contribute to the NADP(+) site. K216 is a phosphate binding site. R237 is a binding site for substrate. Residue H244 is the Proton acceptor of the active site. N317 serves as a coordination point for NADP(+).

Belongs to the aspartate-semialdehyde dehydrogenase family. As to quaternary structure, homodimer.

It catalyses the reaction L-aspartate 4-semialdehyde + phosphate + NADP(+) = 4-phospho-L-aspartate + NADPH + H(+). The protein operates within amino-acid biosynthesis; L-lysine biosynthesis via DAP pathway; (S)-tetrahydrodipicolinate from L-aspartate: step 2/4. It functions in the pathway amino-acid biosynthesis; L-methionine biosynthesis via de novo pathway; L-homoserine from L-aspartate: step 2/3. Its pathway is amino-acid biosynthesis; L-threonine biosynthesis; L-threonine from L-aspartate: step 2/5. In terms of biological role, catalyzes the NADPH-dependent formation of L-aspartate-semialdehyde (L-ASA) by the reductive dephosphorylation of L-aspartyl-4-phosphate. This is Aspartate-semialdehyde dehydrogenase from Rickettsia conorii (strain ATCC VR-613 / Malish 7).